Here is a 307-residue protein sequence, read N- to C-terminus: Opsin-like protein carO (307 aa).

The N-linked (GlcNAc...) asparagine glycan is linked to N28. A run of 7 helical transmembrane segments spans residues 36–56 (WYWA…GLGM), 64–84 (IFHY…FTMA), 118–138 (WFLT…MPWP), 140–160 (VLWV…GALV), 166–186 (WGYF…LAWE), 202–222 (FVMC…AWGV), and 235–255 (AVFY…LLLW). A disordered region spans residues 280 to 307 (GPNNKVASGHGARNDTATASGSNVNPNA). An N-linked (GlcNAc...) asparagine glycan is attached at N293. Residues 294–307 (DTATASGSNVNPNA) are compositionally biased toward polar residues.

This sequence belongs to the archaeal/bacterial/fungal opsin family.

The protein localises to the membrane. Its function is as follows. Opsin-like protein; part of the car gene cluster that mediates the biosynthesis of neurosporaxanthin, a carboxylic apocarotenoid acting as an essential protective pigment and leading to orange pigmentation. The exact role of carO in carotenoid biosynthesis is not known yet, but it could be involved in the regulation of the pathway by light or other stimuli. The sequence is that of Opsin-like protein carO from Fusarium fujikuroi (Bakanae and foot rot disease fungus).